The following is a 317-amino-acid chain: Transaldolase (317 aa).

Lys-126 acts as the Schiff-base intermediate with substrate in catalysis.

Belongs to the transaldolase family. Type 1 subfamily. In terms of assembly, homodimer.

It is found in the cytoplasm. The catalysed reaction is D-sedoheptulose 7-phosphate + D-glyceraldehyde 3-phosphate = D-erythrose 4-phosphate + beta-D-fructose 6-phosphate. It participates in carbohydrate degradation; pentose phosphate pathway; D-glyceraldehyde 3-phosphate and beta-D-fructose 6-phosphate from D-ribose 5-phosphate and D-xylulose 5-phosphate (non-oxidative stage): step 2/3. Its function is as follows. Transaldolase is important for the balance of metabolites in the pentose-phosphate pathway. This chain is Transaldolase, found in Burkholderia thailandensis (strain ATCC 700388 / DSM 13276 / CCUG 48851 / CIP 106301 / E264).